Consider the following 134-residue polypeptide: Large ribosomal subunit protein bL17 (134 aa).

Belongs to the bacterial ribosomal protein bL17 family. Part of the 50S ribosomal subunit. Contacts protein L32.

The protein is Large ribosomal subunit protein bL17 of Anaplasma marginale (strain Florida).